Reading from the N-terminus, the 198-residue chain is Probable septum site-determining protein MinC (198 aa).

This sequence belongs to the MinC family. As to quaternary structure, interacts with MinD and FtsZ.

Functionally, cell division inhibitor that blocks the formation of polar Z ring septums. Rapidly oscillates between the poles of the cell to destabilize FtsZ filaments that have formed before they mature into polar Z rings. Prevents FtsZ polymerization. The sequence is that of Probable septum site-determining protein MinC from Thermosipho melanesiensis (strain DSM 12029 / CIP 104789 / BI429).